The sequence spans 397 residues: uncharacterized protein (397 aa).

The next 11 membrane-spanning stretches (helical) occupy residues 9–29 (NAVL…GFLT), 38–58 (LLAS…GAQL), 85–105 (FLAA…VGGA), 112–132 (IFGI…ILIF), 148–168 (MGFI…PPVV), 182–202 (PIAI…FAGA), 226–246 (AILI…GVVS), 271–291 (VLFG…AAYT), 310–330 (WIIA…KPAA), 331–351 (VLVF…ALIL), and 365–385 (HPVF…ILSG).

It belongs to the NRAMP family.

Its subcellular location is the cell membrane. This is an uncharacterized protein from Haemophilus influenzae (strain ATCC 51907 / DSM 11121 / KW20 / Rd).